A 544-amino-acid polypeptide reads, in one-letter code: Chaperonin GroEL (544 aa).

ATP contacts are provided by residues 29–32 (TLGP), lysine 50, 86–90 (DGTTT), glycine 414, and aspartate 495.

Belongs to the chaperonin (HSP60) family. Forms a cylinder of 14 subunits composed of two heptameric rings stacked back-to-back. Interacts with the co-chaperonin GroES.

The protein localises to the cytoplasm. The enzyme catalyses ATP + H2O + a folded polypeptide = ADP + phosphate + an unfolded polypeptide.. Functionally, together with its co-chaperonin GroES, plays an essential role in assisting protein folding. The GroEL-GroES system forms a nano-cage that allows encapsulation of the non-native substrate proteins and provides a physical environment optimized to promote and accelerate protein folding. The protein is Chaperonin GroEL of Treponema pallidum subsp. pallidum (strain SS14).